We begin with the raw amino-acid sequence, 94 residues long: Co-chaperonin GroES (94 aa).

It belongs to the GroES chaperonin family. In terms of assembly, heptamer of 7 subunits arranged in a ring. Interacts with the chaperonin GroEL.

The protein resides in the cytoplasm. Functionally, together with the chaperonin GroEL, plays an essential role in assisting protein folding. The GroEL-GroES system forms a nano-cage that allows encapsulation of the non-native substrate proteins and provides a physical environment optimized to promote and accelerate protein folding. GroES binds to the apical surface of the GroEL ring, thereby capping the opening of the GroEL channel. The sequence is that of Co-chaperonin GroES from Streptococcus pneumoniae (strain Taiwan19F-14).